A 280-amino-acid polypeptide reads, in one-letter code: UPF0328 protein ECU06_0020/ECU06_1700 (280 aa).

It belongs to the UPF0328 family.

This is UPF0328 protein ECU06_0020/ECU06_1700 from Encephalitozoon cuniculi (strain GB-M1) (Microsporidian parasite).